The sequence spans 376 residues: Ribonuclease D (376 aa).

The 169-residue stretch at 8–176 (IQWIRDDASL…VYLALDARLS (169 aa)) folds into the 3'-5' exonuclease domain. One can recognise an HRDC domain in the interval 214 to 294 (RPQQLAVLRE…AEAARLPQSE (81 aa)).

This sequence belongs to the RNase D family. Requires a divalent metal cation as cofactor.

It is found in the cytoplasm. The catalysed reaction is Exonucleolytic cleavage that removes extra residues from the 3'-terminus of tRNA to produce 5'-mononucleotides.. Functionally, exonuclease involved in the 3' processing of various precursor tRNAs. Initiates hydrolysis at the 3'-terminus of an RNA molecule and releases 5'-mononucleotides. This Pseudomonas paraeruginosa (strain DSM 24068 / PA7) (Pseudomonas aeruginosa (strain PA7)) protein is Ribonuclease D.